Reading from the N-terminus, the 272-residue chain is Ribosomal RNA small subunit methyltransferase A (272 aa).

S-adenosyl-L-methionine is bound by residues His11, Leu13, Gly38, Glu59, Asp84, and Asn109.

Belongs to the class I-like SAM-binding methyltransferase superfamily. rRNA adenine N(6)-methyltransferase family. RsmA subfamily.

It is found in the cytoplasm. It catalyses the reaction adenosine(1518)/adenosine(1519) in 16S rRNA + 4 S-adenosyl-L-methionine = N(6)-dimethyladenosine(1518)/N(6)-dimethyladenosine(1519) in 16S rRNA + 4 S-adenosyl-L-homocysteine + 4 H(+). Functionally, specifically dimethylates two adjacent adenosines (A1518 and A1519) in the loop of a conserved hairpin near the 3'-end of 16S rRNA in the 30S particle. May play a critical role in biogenesis of 30S subunits. The protein is Ribosomal RNA small subunit methyltransferase A of Rippkaea orientalis (strain PCC 8801 / RF-1) (Cyanothece sp. (strain PCC 8801)).